A 453-amino-acid chain; its full sequence is 5-hydroxytryptamine receptor 1 (453 aa).

Residues 1–36 (MKSLKSSTHDVPHPEHVVWAPPAYDEQHHLFFSHGT) are Extracellular-facing. A helical membrane pass occupies residues 37 to 57 (VLIGIVGSLIITVAVVGNVLV). The Cytoplasmic segment spans residues 58 to 74 (CLAIFTEPILSHSKSNF). Residues 75–94 (FIVSLAVADLLLALLVMTFA) traverse the membrane as a helical segment. Topologically, residues 95–110 (LVNDMYGYWLFGETFC) are extracellular. A disulfide bridge links cysteine 110 with cysteine 225. The helical transmembrane segment at 111–133 (FIWMSADVMCETASIFSICVISY) threads the bilayer. The Cytoplasmic segment spans residues 134-153 (DRLKQVQKPLHYEEFMTTTR). The chain crosses the membrane as a helical span at residues 154–175 (ALLIIACLWICSFVLSFVPIFL). Residues 176–223 (EWHELSVEEIKAIFKDNKTEKEKALEAHNFSSALNQTLGDNQKSNAKH) are Extracellular-facing. Residues 224–244 (VCLFDVHFTYSVIYSFICFYV) form a helical membrane-spanning segment. Topologically, residues 245 to 301 (PCTLMLTNYLRLFLIAQTHQVRIRSLQMTNPPQLRGQGASSYRNQGTQGSKAARTLT) are cytoplasmic. The helical transmembrane segment at 302–322 (IITGTFLACWLPFFIINPIAA) threads the bilayer. The Extracellular segment spans residues 323–331 (ADEHLIPLE). A helical membrane pass occupies residues 332–352 (CFMVTIWLGYFNSSVNPIIYG). Residues 353 to 453 (TSNSKFRAAF…VFDSDTAFSS (101 aa)) are Cytoplasmic-facing. The tract at residues 397-428 (DLSSSEHPSDACDTGRGKNSKGGDCATADPTK) is disordered. Residues 403-412 (HPSDACDTGR) show a composition bias toward basic and acidic residues.

This sequence belongs to the G-protein coupled receptor 1 family. Reproductive system.

It is found in the cell membrane. This is one of the several different receptors for 5-hydroxytryptamine (serotonin). 5-HT plays important roles in various behavioral and physiological processes in aplysia. These include feeding, locomotion, circadian rhythm, learning and memory, synaptic plasticity, and synaptic growth. This receptor is mediated by G proteins that stimulate phospholipase C. This is 5-hydroxytryptamine receptor 1 (5HTB1) from Aplysia californica (California sea hare).